The chain runs to 365 residues: Carbamoyl phosphate synthase small chain (365 aa).

CPSase regions lie at residues Met1 to Gly166 and Met1 to His169. The L-glutamine site is built by Ser45, Gly218, and Gly220. The 188-residue stretch at Arg170–Glu357 folds into the Glutamine amidotransferase type-1 domain. The active-site Nucleophile is Cys245. L-glutamine contacts are provided by Leu246, Gln249, Asn287, Gly289, and Tyr290. Active-site residues include His330 and Glu332.

The protein belongs to the CarA family. In terms of assembly, composed of two chains; the small (or glutamine) chain promotes the hydrolysis of glutamine to ammonia, which is used by the large (or ammonia) chain to synthesize carbamoyl phosphate. Tetramer of heterodimers (alpha,beta)4.

The enzyme catalyses hydrogencarbonate + L-glutamine + 2 ATP + H2O = carbamoyl phosphate + L-glutamate + 2 ADP + phosphate + 2 H(+). It catalyses the reaction L-glutamine + H2O = L-glutamate + NH4(+). Its pathway is amino-acid biosynthesis; L-arginine biosynthesis; carbamoyl phosphate from bicarbonate: step 1/1. It participates in pyrimidine metabolism; UMP biosynthesis via de novo pathway; (S)-dihydroorotate from bicarbonate: step 1/3. Its function is as follows. Small subunit of the glutamine-dependent carbamoyl phosphate synthetase (CPSase). CPSase catalyzes the formation of carbamoyl phosphate from the ammonia moiety of glutamine, carbonate, and phosphate donated by ATP, constituting the first step of 2 biosynthetic pathways, one leading to arginine and/or urea and the other to pyrimidine nucleotides. The small subunit (glutamine amidotransferase) binds and cleaves glutamine to supply the large subunit with the substrate ammonia. The sequence is that of Carbamoyl phosphate synthase small chain from Bacillus cereus (strain ATCC 10987 / NRS 248).